Consider the following 414-residue polypeptide: MRITVMTAGEQIITLDVDSQETVENVKALLEVESNVPIQQQQLLYNGNEMGNSDKLSALGVKDDDLLMMMVSNASSGSATSAAGNDLGMNPDGSALNPAAFQQHIRGDSNLMGQLFQNDPELAQVISGSDLNKLQDVLRARHRQRSVLQRQKEEELALLYADPFDVEAQRKIEAAIRQKGIDENWEAALEHNPEGFARVIMLYVDMEVNGVPLKAFVDSGAQSTIISKSCAERCGLLRLMDQRYKGIAHGVGQTEILGRIHVAPIKIGNNFYPCSFVVLDSPNMEFLFGLDMLRKHQCTIDLKENVMTVGGGEVSVPFLQEKDIPSRFLDEERVPNDASSSGATVPSGFTEKKNNTVANPTSQQPKRQNTSEGPEFEAKIAKLVELGFSRDSVIQALKLFEGNEEQAAGFLFGG.

Positions 1–76 (MRITVMTAGE…LMMMVSNASS (76 aa)) constitute a Ubiquitin-like domain. One can recognise a Peptidase A2 domain in the interval 213 to 292 (LKAFVDSGAQ…NMEFLFGLDM (80 aa)). Residue Asp-218 is part of the active site. The disordered stretch occupies residues 332-374 (ERVPNDASSSGATVPSGFTEKKNNTVANPTSQQPKRQNTSEGP). The span at 355–372 (NTVANPTSQQPKRQNTSE) shows a compositional bias: polar residues. The UBA domain maps to 374–414 (PEFEAKIAKLVELGFSRDSVIQALKLFEGNEEQAAGFLFGG).

The protein belongs to the DDI1 family. In terms of assembly, homodimer.

It is found in the cytoplasm. The protein resides in the cytosol. Receptor of ubiquitinated protein targeted to ubiquitin/proteasome-mediated proteolysis (UPP). Relatively weak affinity for both 'Lys-48'- and 'Lys-63'-linked ubiquitin chains with a slight preference for 'Lys-48-'linked chains of three or more ubiquitin units. This chain is Protein DNA-DAMAGE INDUCIBLE 1, found in Arabidopsis thaliana (Mouse-ear cress).